Reading from the N-terminus, the 148-residue chain is Transcriptional regulator MraZ (148 aa).

SpoVT-AbrB domains are found at residues 5-51 (STQL…PQPV) and 80-123 (ASDV…DMAK).

The protein belongs to the MraZ family. Forms oligomers.

Its subcellular location is the cytoplasm. The protein resides in the nucleoid. This Nitrosomonas europaea (strain ATCC 19718 / CIP 103999 / KCTC 2705 / NBRC 14298) protein is Transcriptional regulator MraZ.